A 138-amino-acid polypeptide reads, in one-letter code: Putative pre-16S rRNA nuclease (138 aa).

Belongs to the YqgF nuclease family.

It localises to the cytoplasm. Functionally, could be a nuclease involved in processing of the 5'-end of pre-16S rRNA. This chain is Putative pre-16S rRNA nuclease, found in Geobacillus kaustophilus (strain HTA426).